The primary structure comprises 307 residues: Lipoyl synthase (307 aa).

[4Fe-4S] cluster contacts are provided by Cys55, Cys60, Cys66, Cys81, Cys85, Cys88, and Ser292. The 215-residue stretch at 67–281 folds into the Radical SAM core domain; that stretch reads WEDREATFLI…ARHAEELGFS (215 aa).

The protein belongs to the radical SAM superfamily. Lipoyl synthase family. The cofactor is [4Fe-4S] cluster.

It is found in the cytoplasm. It carries out the reaction [[Fe-S] cluster scaffold protein carrying a second [4Fe-4S](2+) cluster] + N(6)-octanoyl-L-lysyl-[protein] + 2 oxidized [2Fe-2S]-[ferredoxin] + 2 S-adenosyl-L-methionine + 4 H(+) = [[Fe-S] cluster scaffold protein] + N(6)-[(R)-dihydrolipoyl]-L-lysyl-[protein] + 4 Fe(3+) + 2 hydrogen sulfide + 2 5'-deoxyadenosine + 2 L-methionine + 2 reduced [2Fe-2S]-[ferredoxin]. The protein operates within protein modification; protein lipoylation via endogenous pathway; protein N(6)-(lipoyl)lysine from octanoyl-[acyl-carrier-protein]: step 2/2. Functionally, catalyzes the radical-mediated insertion of two sulfur atoms into the C-6 and C-8 positions of the octanoyl moiety bound to the lipoyl domains of lipoate-dependent enzymes, thereby converting the octanoylated domains into lipoylated derivatives. The sequence is that of Lipoyl synthase from Mycolicibacterium paratuberculosis (strain ATCC BAA-968 / K-10) (Mycobacterium paratuberculosis).